The chain runs to 348 residues: S-adenosylmethionine:tRNA ribosyltransferase-isomerase (348 aa).

The protein belongs to the QueA family. As to quaternary structure, monomer.

The protein resides in the cytoplasm. The catalysed reaction is 7-aminomethyl-7-carbaguanosine(34) in tRNA + S-adenosyl-L-methionine = epoxyqueuosine(34) in tRNA + adenine + L-methionine + 2 H(+). The protein operates within tRNA modification; tRNA-queuosine biosynthesis. Functionally, transfers and isomerizes the ribose moiety from AdoMet to the 7-aminomethyl group of 7-deazaguanine (preQ1-tRNA) to give epoxyqueuosine (oQ-tRNA). This Alteromonas mediterranea (strain DSM 17117 / CIP 110805 / LMG 28347 / Deep ecotype) protein is S-adenosylmethionine:tRNA ribosyltransferase-isomerase.